The primary structure comprises 161 residues: Nucleotide-binding protein Pnuc_0290 (161 aa).

This sequence belongs to the YajQ family.

In terms of biological role, nucleotide-binding protein. The polypeptide is Nucleotide-binding protein Pnuc_0290 (Polynucleobacter asymbioticus (strain DSM 18221 / CIP 109841 / QLW-P1DMWA-1) (Polynucleobacter necessarius subsp. asymbioticus)).